Here is a 730-residue protein sequence, read N- to C-terminus: Meiotically up-regulated gene 70 protein (730 aa).

A disordered region spans residues 1–27 (MTVGTLSVVSSTASDTASHVSDTRKRQ). Over residues 7-20 (SVVSSTASDTASHV) the composition is skewed to low complexity. 4 CBS domains span residues 69-127 (ALDP…LNAR), 135-200 (MSTS…RIAR), 263-319 (SSEE…GLDP), and 328-385 (MTPH…PEEE). 2 helical membrane-spanning segments follow: residues 290–310 (AVLV…DVVL) and 358–378 (VVDE…ATAI). The disordered stretch occupies residues 420-517 (ENYDVNPPLP…ENGSNSFAAS (98 aa)). Composition is skewed to polar residues over residues 458 to 470 (AWQN…NNKP) and 480 to 515 (YNFS…NSFA). The region spanning 572–649 (PSQFTIKYRS…ARRRGLPRLE (78 aa)) is the PB1 domain. Residues 706–726 (PIYIGIVSSSIVILAVSMWYL) form a helical membrane-spanning segment.

The protein localises to the cytoplasm. The protein resides in the nucleus membrane. Its function is as follows. Has a role in meiosis. The sequence is that of Meiotically up-regulated gene 70 protein (mug70) from Schizosaccharomyces pombe (strain 972 / ATCC 24843) (Fission yeast).